The sequence spans 306 residues: Ribosomal RNA small subunit methyltransferase H (306 aa).

S-adenosyl-L-methionine-binding positions include 37 to 39 (GGH), Asp56, Asp102, and Gln109.

The protein belongs to the methyltransferase superfamily. RsmH family.

Its subcellular location is the cytoplasm. The catalysed reaction is cytidine(1402) in 16S rRNA + S-adenosyl-L-methionine = N(4)-methylcytidine(1402) in 16S rRNA + S-adenosyl-L-homocysteine + H(+). Specifically methylates the N4 position of cytidine in position 1402 (C1402) of 16S rRNA. This is Ribosomal RNA small subunit methyltransferase H from Nautilia profundicola (strain ATCC BAA-1463 / DSM 18972 / AmH).